Here is a 762-residue protein sequence, read N- to C-terminus: cGMP-dependent protein kinase 2 (762 aa).

Positions 1–25 (MGNGSVKPKHSKHPDGQSGNLSNEA) are disordered. G2 carries N-myristoyl glycine lipidation. Residues S110 and S117 each carry the phosphoserine modification. Residues 112-138 (LVSLHSRRGAKAGVSAEPTSRTYDLNK) are disordered. The segment at 168-283 (FLKRLDPQQI…DEEYRNFLRS (116 aa)) is cGMP-binding, high affinity; cAMP-binding, moderate affinity. Residues 232-235 (GELA), 242-243 (RT), K347, 356-359 (GEKA), 366-367 (RS), D412, and R415 each bind 3',5'-cyclic GMP. Residues 286-416 (LLKNLPEDKL…TLNRDDEKRH (131 aa)) are cGMP-binding, high affinity; cAMP-binding, low affinity. S431 is subject to Phosphoserine. Positions 453-711 (LEIIATLGVG…INDIKKHRWL (259 aa)) constitute a Protein kinase domain. Residues 459–467 (LGVGGFGRV) and K482 contribute to the ATP site. The active-site Proton acceptor is D576. T609 carries the phosphothreonine modification. An AGC-kinase C-terminal domain is found at 712–762 (NGFNWEGLKARSLPSPLRRELSGPIDHSYFDKYPPEKGVPPDEMSGWDKDF). The segment at 740–762 (YFDKYPPEKGVPPDEMSGWDKDF) is disordered.

It belongs to the protein kinase superfamily. AGC Ser/Thr protein kinase family. cGMP subfamily. As to quaternary structure, interacts with GRIA1/GLUR1. Post-translationally, myristoylation mediates membrane localization. In terms of tissue distribution, highly expressed in intestinal mucosa and is 20 times less abundant in brain and kidney. Expressed in jejunum, in the apical domain of the villus epithelium.

It localises to the apical cell membrane. Its subcellular location is the cell membrane. It carries out the reaction L-seryl-[protein] + ATP = O-phospho-L-seryl-[protein] + ADP + H(+). It catalyses the reaction L-threonyl-[protein] + ATP = O-phospho-L-threonyl-[protein] + ADP + H(+). With respect to regulation, binding of cGMP results in enzyme activation. In terms of biological role, crucial regulator of intestinal secretion and bone growth. Phosphorylates and activates CFTR on the plasma membrane. Plays a key role in intestinal secretion by regulating cGMP-dependent translocation of CFTR in jejunum. Acts downstream of NMDAR to activate the plasma membrane accumulation of GRIA1/GLUR1 in synapse and increase synaptic plasticity. Phosphorylates GRIA1/GLUR1 at Ser-863. Acts as regulator of gene expression and activator of the extracellular signal-regulated kinases MAPK3/ERK1 and MAPK1/ERK2 in mechanically stimulated osteoblasts. Under fluid shear stress, mediates ERK activation and subsequent induction of FOS, FOSL1/FRA1, FOSL2/FRA2 and FOSB that play a key role in the osteoblast anabolic response to mechanical stimulation. This is cGMP-dependent protein kinase 2 (Prkg2) from Rattus norvegicus (Rat).